The sequence spans 353 residues: MTAILEKTEVQSLWARFAAWIVSTENRLYIGWFGVLMIPCLLTATSVFIIAFVAAPPVDIDGIREPVSGSLLYGNNIISGAVVPTSNAIGLHFYPIWEAATVDEWLYNGGPYQLVVCHFFIGICCYMGREWELSYRLGMRPWIAVAYSAPVAAATAVFIIYPIGQGSFSDGMPLGISGTFNFMIVFQAEHNILMHPFHMLGVAGVFGGSLFSAMHGSLVTSSLIRETTEAVSTNAGYRFGQEEETYNILAAHGYFGRLIFQYASFNNSRSLHFFLAIWPVVGIWFTALGLSTMAFNLNGLNFNQSIVDSQGRVVNTWADIINRANLGMEVMHERNAHNFPLDLASVEAPSING.

At T2 the chain carries N-acetylthreonine. T2 bears the Phosphothreonine mark. Helical transmembrane passes span 29–46 (YIGWFGVLMIPCLLTATS), 118–133 (HFFIGICCYMGREWEL), and 142–156 (WIAVAYSAPVAAATA). H118 serves as a coordination point for chlorophyll a. Y126 lines the pheophytin a pocket. [CaMn4O5] cluster contacts are provided by D170 and E189. The chain crosses the membrane as a helical span at residues 197 to 218 (FHMLGVAGVFGGSLFSAMHGSL). Chlorophyll a is bound at residue H198. A quinone-binding positions include H215 and 264–265 (SF). Residue H215 coordinates Fe cation. H272 is a Fe cation binding site. The helical transmembrane segment at 274–288 (FLAIWPVVGIWFTAL) threads the bilayer. Positions 332, 333, 342, and 344 each coordinate [CaMn4O5] cluster. The propeptide occupies 345–353 (SVEAPSING).

It belongs to the reaction center PufL/M/PsbA/D family. PSII is composed of 1 copy each of membrane proteins PsbA, PsbB, PsbC, PsbD, PsbE, PsbF, PsbH, PsbI, PsbJ, PsbK, PsbL, PsbM, PsbT, PsbX, PsbY, PsbZ, Psb30/Ycf12, at least 3 peripheral proteins of the oxygen-evolving complex and a large number of cofactors. It forms dimeric complexes. The cofactor is The D1/D2 heterodimer binds P680, chlorophylls that are the primary electron donor of PSII, and subsequent electron acceptors. It shares a non-heme iron and each subunit binds pheophytin, quinone, additional chlorophylls, carotenoids and lipids. D1 provides most of the ligands for the Mn4-Ca-O5 cluster of the oxygen-evolving complex (OEC). There is also a Cl(-1) ion associated with D1 and D2, which is required for oxygen evolution. The PSII complex binds additional chlorophylls, carotenoids and specific lipids.. Tyr-161 forms a radical intermediate that is referred to as redox-active TyrZ, YZ or Y-Z. In terms of processing, C-terminally processed by CTPA; processing is essential to allow assembly of the oxygen-evolving complex and thus photosynthetic growth.

The protein localises to the plastid. It localises to the chloroplast thylakoid membrane. It catalyses the reaction 2 a plastoquinone + 4 hnu + 2 H2O = 2 a plastoquinol + O2. Functionally, photosystem II (PSII) is a light-driven water:plastoquinone oxidoreductase that uses light energy to abstract electrons from H(2)O, generating O(2) and a proton gradient subsequently used for ATP formation. It consists of a core antenna complex that captures photons, and an electron transfer chain that converts photonic excitation into a charge separation. The D1/D2 (PsbA/PsbD) reaction center heterodimer binds P680, the primary electron donor of PSII as well as several subsequent electron acceptors. This Stigeoclonium helveticum (Green alga) protein is Photosystem II protein D1.